Consider the following 598-residue polypeptide: Polypeptide N-acetylgalactosaminyltransferase 17 (598 aa).

The Cytoplasmic portion of the chain corresponds to M1 to R6. A helical; Signal-anchor for type II membrane protein membrane pass occupies residues V7–K27. The Lumenal segment spans residues C28 to K598. An N-linked (GlcNAc...) asparagine glycan is attached at N50. 2 cysteine pairs are disulfide-bonded: C142–C373 and C364–C443. The interval L151–R262 is catalytic subdomain A. Substrate contacts are provided by D192 and R223. 3 residues coordinate Mn(2+): D246, H248, and H378. The segment at P319–R381 is catalytic subdomain B. R381 and Y386 together coordinate substrate. Residues N461 and N486 are each glycosylated (N-linked (GlcNAc...) asparagine). Residues A465–K594 enclose the Ricin B-type lectin domain. 3 disulfide bridges follow: C478–C494, C526–C541, and C568–C586.

This sequence belongs to the glycosyltransferase 2 family. GalNAc-T subfamily. The cofactor is Mn(2+). In terms of tissue distribution, highly expressed in brain and heart. Weakly expressed in kidney, liver, lung and spleen.

The protein localises to the golgi apparatus membrane. It carries out the reaction L-seryl-[protein] + UDP-N-acetyl-alpha-D-galactosamine = a 3-O-[N-acetyl-alpha-D-galactosaminyl]-L-seryl-[protein] + UDP + H(+). The catalysed reaction is L-threonyl-[protein] + UDP-N-acetyl-alpha-D-galactosamine = a 3-O-[N-acetyl-alpha-D-galactosaminyl]-L-threonyl-[protein] + UDP + H(+). The protein operates within protein modification; protein glycosylation. May catalyze the initial reaction in O-linked oligosaccharide biosynthesis, the transfer of an N-acetyl-D-galactosamine residue to a serine or threonine residue on the protein receptor. This is Polypeptide N-acetylgalactosaminyltransferase 17 from Homo sapiens (Human).